A 502-amino-acid chain; its full sequence is Protein GIS3 (502 aa).

Its subcellular location is the cytoplasm. The protein resides in the nucleus. This Saccharomyces cerevisiae (strain ATCC 204508 / S288c) (Baker's yeast) protein is Protein GIS3 (GIS3).